We begin with the raw amino-acid sequence, 219 residues long: Glucagon-2 (219 aa).

An N-terminal signal peptide occupies residues 1–20 (MKSTCYMIGILLLILQNTYQ). 5 consecutive propeptides follow at residues 21-50 (SPVP…LKEV), 84-95 (SGGLSRRNADYE), 136-140 (NAEIE), 175-178 (IRYS), and 213-219 (KDLLEEH). A disordered region spans residues 23 to 43 (VPEADGSSRSVKAARNEAVDD).

It belongs to the glucagon family.

It localises to the secreted. Functionally, promotes hydrolysis of glycogen and lipids, and raises the blood sugar level. In Xenopus laevis (African clawed frog), this protein is Glucagon-2 (gcg2).